Reading from the N-terminus, the 204-residue chain is Potassium-transporting ATPase KdpC subunit (204 aa).

A helical membrane pass occupies residues Ala-21–Val-41.

Belongs to the KdpC family. In terms of assembly, the system is composed of three essential subunits: KdpA, KdpB and KdpC.

The protein localises to the cell inner membrane. Functionally, part of the high-affinity ATP-driven potassium transport (or Kdp) system, which catalyzes the hydrolysis of ATP coupled with the electrogenic transport of potassium into the cytoplasm. This subunit acts as a catalytic chaperone that increases the ATP-binding affinity of the ATP-hydrolyzing subunit KdpB by the formation of a transient KdpB/KdpC/ATP ternary complex. The protein is Potassium-transporting ATPase KdpC subunit of Ralstonia nicotianae (strain ATCC BAA-1114 / GMI1000) (Ralstonia solanacearum).